The primary structure comprises 1231 residues: Fanconi anemia group J protein homolog (1231 aa).

Residues 11 to 448 (GGVKILFPCR…SDHEPLRAVC (438 aa)) form the Helicase ATP-binding domain. Residue 46–53 (SPTGSGKS) participates in ATP binding. Disordered regions lie at residues 104–126 (TFSSDRQMNSTDNAPSNISGASS) and 147–166 (QDDDFQTDRKRIRQSHDEQL). Over residues 152-166 (QTDRKRIRQSHDEQL) the composition is skewed to basic and acidic residues. Residues 155–173 (RKRIRQSHDEQLQARKRRC) carry the Nuclear localization signal motif. The [4Fe-4S] cluster site is built by Cys291, Cys304, Cys316, and Cys356. Positions 399-402 (DEAH) match the DEAH box motif. Residues 890–903 (SKNQQQRMQMSSTN) show a composition bias toward polar residues. Disordered regions lie at residues 890–924 (SKNQQQRMQMSSTNCDDEPSQGTSSSSKNTSPTSS), 936–956 (VSEFTQPTSSTQSSVTSPPEI), and 1195–1231 (GNENAFNIGRNKGTEQKNRENRLSRSRNKGVSSFFLD). 2 stretches are compositionally biased toward low complexity: residues 909–924 (SQGTSSSSKNTSPTSS) and 940–954 (TQPTSSTQSSVTSPP). Basic and acidic residues predominate over residues 1206-1217 (KGTEQKNRENRL).

Belongs to the DEAD box helicase family. DEAH subfamily. Requires [4Fe-4S] cluster as cofactor.

Its subcellular location is the nucleus. It carries out the reaction Couples ATP hydrolysis with the unwinding of duplex DNA at the replication fork by translocating in the 5'-3' direction. This creates two antiparallel DNA single strands (ssDNA). The leading ssDNA polymer is the template for DNA polymerase III holoenzyme which synthesizes a continuous strand.. It catalyses the reaction ATP + H2O = ADP + phosphate + H(+). DNA-dependent helicase and 5' to 3' DNA helicase required for the maintenance of chromosomal stability. Involved in the repair of DNA double-strand breaks by homologous recombination. Involved in the repair of abasic sites at replication forks by promoting the degradation of DNA-protein cross-links: acts by catalyzing unfolding of HMCES DNA-protein cross-link via its helicase activity, exposing the underlying DNA and enabling cleavage of the DNA-protein adduct by the SPRTN metalloprotease. This is Fanconi anemia group J protein homolog (brip1.L) from Xenopus laevis (African clawed frog).